Consider the following 229-residue polypeptide: Octanoyltransferase (229 aa).

Positions 47–225 (PSSPEAVWIL…SLAARFHLAW (179 aa)) constitute a BPL/LPL catalytic domain. Substrate contacts are provided by residues 89-96 (RGGEVTHH), 156-158 (AIG), and 169-171 (GLA). The active-site Acyl-thioester intermediate is the Cys187.

It belongs to the LipB family.

The protein resides in the cytoplasm. It carries out the reaction octanoyl-[ACP] + L-lysyl-[protein] = N(6)-octanoyl-L-lysyl-[protein] + holo-[ACP] + H(+). The protein operates within protein modification; protein lipoylation via endogenous pathway; protein N(6)-(lipoyl)lysine from octanoyl-[acyl-carrier-protein]: step 1/2. In terms of biological role, catalyzes the transfer of endogenously produced octanoic acid from octanoyl-acyl-carrier-protein onto the lipoyl domains of lipoate-dependent enzymes. Lipoyl-ACP can also act as a substrate although octanoyl-ACP is likely to be the physiological substrate. This chain is Octanoyltransferase, found in Synechococcus sp. (strain CC9902).